Here is a 36-residue protein sequence, read N- to C-terminus: Amanexitide proprotein 1 (36 aa).

Positions 1–10 (MSDINTARLP) are excised as a propeptide. The cyclopeptide (Val-Pro) cross-link spans 11–19 (VFSLPVFFP). Residues 20–36 (FVSDDIQAVLTRGESLC) constitute a propeptide that is removed on maturation.

This sequence belongs to the MSDIN fungal toxin family. Processed by the macrocyclase-peptidase enzyme POPB to yield a toxic cyclic nonapeptide. POPB first removes 10 residues from the N-terminus. Conformational trapping of the remaining peptide forces the enzyme to release this intermediate rather than proceed to macrocyclization. The enzyme rebinds the remaining peptide in a different conformation and catalyzes macrocyclization of the N-terminal 9 residues. In terms of tissue distribution, expressed in basidiocarps.

Cyclic nonapeptide that belongs to the MSDIN-like toxin family responsible for a large number of food poisoning cases and deaths. This Amanita exitialis (Guangzhou destroying angel) protein is Amanexitide proprotein 1.